The following is a 538-amino-acid chain: Aldehyde dehydrogenase family 2 member B4, mitochondrial (538 aa).

Residues 1 to 38 constitute a mitochondrion transit peptide; that stretch reads MAARRVSSLLSRSFSASSPLLFRSQGRNCYNGGILRRF. 282 to 287 is a binding site for NAD(+); the sequence is GSTDTG. Glu-305 functions as the Proton acceptor in the catalytic mechanism. The active-site Nucleophile is Cys-339.

It belongs to the aldehyde dehydrogenase family. In terms of assembly, homotetramer.

It is found in the mitochondrion matrix. It catalyses the reaction an aldehyde + NAD(+) + H2O = a carboxylate + NADH + 2 H(+). Its function is as follows. Possesses activity on acetaldehyde and glycolaldehyde in vitro. The sequence is that of Aldehyde dehydrogenase family 2 member B4, mitochondrial (ALDH2B4) from Arabidopsis thaliana (Mouse-ear cress).